Reading from the N-terminus, the 239-residue chain is MNIHLDKYGQGMPLVLFHGWGFDSQIWQPIIPYLKPKYQIILVDLPGFGLTPMMDWESFKKNLLDQLPDKFALAGWSMGGLYATRLAIEEPARVQYLINITSSPRFISDVDWPGVAEEVFVNFYNNLSKDINKTLKEFISLQLNKMKFDFKIGNPPSPEGLAFGLEILGTWDFREQLKQISIPTVYLFGRLDPITPAKTMAIMEKNYPNFKYVLFNRAAHMPFLSHTDLFITMMDEFIK.

Residues Trp-20, 77-78 (SM), and 138-142 (FISLQ) each bind substrate. The active-site Nucleophile is the Ser-77. Catalysis depends on residues Asp-192 and His-220. His-220 is a binding site for substrate.

Belongs to the AB hydrolase superfamily. Carboxylesterase BioH family. As to quaternary structure, monomer.

It localises to the cytoplasm. It catalyses the reaction 6-carboxyhexanoyl-[ACP] methyl ester + H2O = 6-carboxyhexanoyl-[ACP] + methanol + H(+). It participates in cofactor biosynthesis; biotin biosynthesis. The physiological role of BioH is to remove the methyl group introduced by BioC when the pimeloyl moiety is complete. It allows to synthesize pimeloyl-ACP via the fatty acid synthetic pathway through the hydrolysis of the ester bonds of pimeloyl-ACP esters. This chain is Pimeloyl-[acyl-carrier protein] methyl ester esterase, found in Legionella pneumophila (strain Corby).